Here is a 325-residue protein sequence, read N- to C-terminus: Glycerol-3-phosphate dehydrogenase [NAD(P)+] (325 aa).

Residues Ser14, Phe15, Arg35, and Lys109 each coordinate NADPH. The sn-glycerol 3-phosphate site is built by Lys109 and Gly137. NADPH is bound at residue Ala141. Residues Lys192, Asp247, Ser257, Arg258, and Asn259 each contribute to the sn-glycerol 3-phosphate site. The active-site Proton acceptor is the Lys192. Arg258 lines the NADPH pocket. Positions 282 and 284 each coordinate NADPH.

The protein belongs to the NAD-dependent glycerol-3-phosphate dehydrogenase family.

The protein localises to the cytoplasm. The enzyme catalyses sn-glycerol 3-phosphate + NAD(+) = dihydroxyacetone phosphate + NADH + H(+). It catalyses the reaction sn-glycerol 3-phosphate + NADP(+) = dihydroxyacetone phosphate + NADPH + H(+). It functions in the pathway membrane lipid metabolism; glycerophospholipid metabolism. Its function is as follows. Catalyzes the reduction of the glycolytic intermediate dihydroxyacetone phosphate (DHAP) to sn-glycerol 3-phosphate (G3P), the key precursor for phospholipid synthesis. This chain is Glycerol-3-phosphate dehydrogenase [NAD(P)+], found in Rickettsia conorii (strain ATCC VR-613 / Malish 7).